A 352-amino-acid polypeptide reads, in one-letter code: Desmethylxanthohumol 6'-O-methyltransferase (352 aa).

Asp-219 provides a ligand contact to S-adenosyl-L-methionine. Residue His-257 is the Proton acceptor of the active site.

Belongs to the class I-like SAM-binding methyltransferase superfamily. Cation-independent O-methyltransferase family. As to quaternary structure, homodimer. As to expression, highly expressed in lupulin glands. Detected in early-, mid- and late-stage cones.

The protein resides in the cytoplasm. The enzyme catalyses desmethylxanthohumol + S-adenosyl-L-methionine = xanthohumol + S-adenosyl-L-homocysteine + H(+). The catalysed reaction is xanthogalenol + S-adenosyl-L-methionine = 4'-O-methylxanthohumol + S-adenosyl-L-homocysteine + H(+). The protein operates within secondary metabolite biosynthesis. Its activity is regulated as follows. Inhibited by S-adenosyl homocysteine. Involved in the biosynthesis of prenylated phenolics natural products which contribute to the bitter taste of beer and display broad biological activities. Catalyzes the biosynthesis of xanthohumol. Methylates desmethylxanthohumol and xanthogalenol, but not caffeic acid, prenylflavanones, simple phenols or phenylpropanoids. This Humulus lupulus (European hop) protein is Desmethylxanthohumol 6'-O-methyltransferase.